The following is an 807-amino-acid chain: Sucrose synthase 1 (807 aa).

Positions 272-748 (MMFNVVILSP…GLKRIYEKYT (477 aa)) are GT-B glycosyltransferase.

This sequence belongs to the glycosyltransferase 1 family. Plant sucrose synthase subfamily. As to quaternary structure, forms homotetramers. In endosperm it forms both homotetramers and heterotetramers with SS2, all three possible heterotetramers are formed. As to expression, highly expressed in developing endosperm and in roots and, at lower levels, in coleoptiles and aleurone. In 3 day old roots it is detected in cap cells and along the vascular strand, starting just after the meristemic region. In 9 day old leaves it is found in the phloem. In seeds it is distributed throughout the endosperm and also found in the assimilate-unloading tissues, the nucellar projection, the vascular area and at a high concentration in the chalazal region.

The enzyme catalyses an NDP-alpha-D-glucose + D-fructose = a ribonucleoside 5'-diphosphate + sucrose + H(+). Functionally, sucrose-cleaving enzyme that provides UDP-glucose and fructose for various metabolic pathways. This chain is Sucrose synthase 1 (SS1), found in Hordeum vulgare (Barley).